Consider the following 276-residue polypeptide: Short-chain dehydrogenase/reductase ATR10 (276 aa).

Residues isoleucine 29, serine 51, aspartate 78, and asparagine 105 each coordinate NADP(+). Serine 161 (proton donor) is an active-site residue. The NADP(+) site is built by lysine 185 and threonine 214. Lysine 185 acts as the Lowers pKa of active site Tyr in catalysis.

It belongs to the short-chain dehydrogenases/reductases (SDR) family.

Its pathway is mycotoxin biosynthesis. Functionally, short-chain dehydrogenase/reductase; part of the core atranone cluster (CAC) which products are predicted to catalyze most or all steps of mycotoxin atranone synthesis, starting from geranylgeranyl pyrophosphate (GGPP). The initial cyclization of GGPP to dolabellane is probably performed by the terpene cyclase ATR13. The Baeyer-Villiger oxidation near the end of the atranone synthesis, which converts atranones D and E to atranones F and G is predicted to be catalyzed by the monooxygenase ATR8. Of the CAC's other predicted gene products, the reducing PKS ATR6 might synthesize a polyketide chain. This polyketide is probably transferred onto the atranone backbone by the polyketide transferase ATR5. Other predicted CAC products include 4 oxygenases (ATR2, ATR3, ATR4, and ATR14), 3 short-chain reductases (ATR7, ATR9, and ATR10), and a methyltransferase (ATR12). These may all be involved in the various steps of atranone biosynthesis, although their specific roles must await experimental determination. In Stachybotrys chlorohalonatus (strain IBT 40285), this protein is Short-chain dehydrogenase/reductase ATR10.